The sequence spans 422 residues: UPF0761 membrane protein LHK_02978 (422 aa).

6 helical membrane-spanning segments follow: residues 44–64 (LLSLVPLITITLIVVAAFPVF), 102–122 (LTAVGLALLAFTSLSLMLTID), 141–161 (MLVYWTVLTLGPLLLGVGISG), 178–198 (LAGIIQNLGSLTLATVMLTVL), 212–232 (ALIGGALTALTLGVAQAGFGL), and 246–266 (AFATFPFLLIWLQLMWLTVLI).

Belongs to the UPF0761 family.

The protein resides in the cell inner membrane. The sequence is that of UPF0761 membrane protein LHK_02978 from Laribacter hongkongensis (strain HLHK9).